Consider the following 152-residue polypeptide: Large ribosomal subunit protein uL15 (152 aa).

Over residues 1–12 (MTSTLNTLKSNT) the composition is skewed to polar residues. The disordered stretch occupies residues 1 to 57 (MTSTLNTLKSNTGSRKKKLRKGRGIAAGQGASCGFGMRGQKSRSGRPTRPGFEGGQM). Residues 14-23 (SRKKKLRKGR) are compositionally biased toward basic residues. The segment covering 25-37 (IAAGQGASCGFGM) has biased composition (gly residues).

The protein belongs to the universal ribosomal protein uL15 family. As to quaternary structure, part of the 50S ribosomal subunit.

In terms of biological role, binds to the 23S rRNA. This Prochlorococcus marinus subsp. pastoris (strain CCMP1986 / NIES-2087 / MED4) protein is Large ribosomal subunit protein uL15.